A 691-amino-acid polypeptide reads, in one-letter code: Elongation factor G (691 aa).

In terms of domain architecture, tr-type G spans 8–282 (ERVRNIGIAA…AVVDYLPAPI (275 aa)). Residues 17-24 (AHIDAGKT), 81-85 (DTPGH), and 135-138 (NKMD) each bind GTP.

This sequence belongs to the TRAFAC class translation factor GTPase superfamily. Classic translation factor GTPase family. EF-G/EF-2 subfamily.

The protein resides in the cytoplasm. Its function is as follows. Catalyzes the GTP-dependent ribosomal translocation step during translation elongation. During this step, the ribosome changes from the pre-translocational (PRE) to the post-translocational (POST) state as the newly formed A-site-bound peptidyl-tRNA and P-site-bound deacylated tRNA move to the P and E sites, respectively. Catalyzes the coordinated movement of the two tRNA molecules, the mRNA and conformational changes in the ribosome. The sequence is that of Elongation factor G from Thermosynechococcus vestitus (strain NIES-2133 / IAM M-273 / BP-1).